The following is a 315-amino-acid chain: Putative serine/threonine-protein phosphatase PP2A-4 catalytic subunit (315 aa).

Mn(2+)-binding residues include Asp63, His65, Asp91, and Asn123. His124 serves as the catalytic Proton donor. Mn(2+) is bound by residues His173 and His247.

This sequence belongs to the PPP phosphatase family. PP-2A subfamily. Requires Mn(2+) as cofactor.

The protein resides in the cytoplasm. The catalysed reaction is O-phospho-L-seryl-[protein] + H2O = L-seryl-[protein] + phosphate. It carries out the reaction O-phospho-L-threonyl-[protein] + H2O = L-threonyl-[protein] + phosphate. The sequence is that of Putative serine/threonine-protein phosphatase PP2A-4 catalytic subunit (PP2A4) from Oryza sativa subsp. indica (Rice).